Consider the following 274-residue polypeptide: Large ribosomal subunit protein uL2 (274 aa).

Disordered stretches follow at residues 40 to 59 (SGGR…GGHK) and 223 to 274 (VAMN…RRSR). Basic residues-rich tracts occupy residues 49 to 59 (VTRRHQGGGHK) and 256 to 274 (YRTR…RRSR).

It belongs to the universal ribosomal protein uL2 family. As to quaternary structure, part of the 50S ribosomal subunit. Forms a bridge to the 30S subunit in the 70S ribosome.

Its function is as follows. One of the primary rRNA binding proteins. Required for association of the 30S and 50S subunits to form the 70S ribosome, for tRNA binding and peptide bond formation. It has been suggested to have peptidyltransferase activity; this is somewhat controversial. Makes several contacts with the 16S rRNA in the 70S ribosome. This is Large ribosomal subunit protein uL2 from Acidithiobacillus ferrooxidans (strain ATCC 23270 / DSM 14882 / CIP 104768 / NCIMB 8455) (Ferrobacillus ferrooxidans (strain ATCC 23270)).